Reading from the N-terminus, the 155-residue chain is Ribosome maturation factor RimP (155 aa).

This sequence belongs to the RimP family.

The protein resides in the cytoplasm. Required for maturation of 30S ribosomal subunits. In Parabacteroides distasonis (strain ATCC 8503 / DSM 20701 / CIP 104284 / JCM 5825 / NCTC 11152), this protein is Ribosome maturation factor RimP.